The following is a 455-amino-acid chain: L-serine dehydratase (455 aa).

It belongs to the iron-sulfur dependent L-serine dehydratase family. It depends on [4Fe-4S] cluster as a cofactor.

The enzyme catalyses L-serine = pyruvate + NH4(+). It participates in carbohydrate biosynthesis; gluconeogenesis. This chain is L-serine dehydratase (sdaA), found in Helicobacter pylori (strain J99 / ATCC 700824) (Campylobacter pylori J99).